The primary structure comprises 226 residues: 7-cyano-7-deazaguanine synthase (226 aa).

9 to 19 (LSGGLDSTVAT) contributes to the ATP binding site. 4 residues coordinate Zn(2+): C192, C200, C203, and C206.

Belongs to the QueC family. Zn(2+) serves as cofactor.

It carries out the reaction 7-carboxy-7-deazaguanine + NH4(+) + ATP = 7-cyano-7-deazaguanine + ADP + phosphate + H2O + H(+). It functions in the pathway purine metabolism; 7-cyano-7-deazaguanine biosynthesis. Catalyzes the ATP-dependent conversion of 7-carboxy-7-deazaguanine (CDG) to 7-cyano-7-deazaguanine (preQ(0)). The protein is 7-cyano-7-deazaguanine synthase of Methanosphaera stadtmanae (strain ATCC 43021 / DSM 3091 / JCM 11832 / MCB-3).